Consider the following 200-residue polypeptide: Ribonuclease HII (200 aa).

The 195-residue stretch at 6–200 (ESIAGVDEVG…KLFAVHGSLT (195 aa)) folds into the RNase H type-2 domain. A divalent metal cation is bound by residues D12, E13, and D108.

It belongs to the RNase HII family. Mn(2+) is required as a cofactor. It depends on Mg(2+) as a cofactor.

It is found in the cytoplasm. The enzyme catalyses Endonucleolytic cleavage to 5'-phosphomonoester.. In terms of biological role, endonuclease that specifically degrades the RNA of RNA-DNA hybrids. This is Ribonuclease HII from Prochlorococcus marinus (strain MIT 9303).